A 315-amino-acid polypeptide reads, in one-letter code: uncharacterized protein (315 aa).

This sequence belongs to the carbohydrate kinase PfkB family.

This is an uncharacterized protein from Escherichia coli (strain K12).